A 356-amino-acid chain; its full sequence is Ribosomal RNA large subunit methyltransferase M (356 aa).

S-adenosyl-L-methionine contacts are provided by residues Ser187, 220–223 (CPGG), Asp239, Asp259, and Asp276. Lys305 functions as the Proton acceptor in the catalytic mechanism.

This sequence belongs to the class I-like SAM-binding methyltransferase superfamily. RNA methyltransferase RlmE family. RlmM subfamily. As to quaternary structure, monomer.

Its subcellular location is the cytoplasm. It carries out the reaction cytidine(2498) in 23S rRNA + S-adenosyl-L-methionine = 2'-O-methylcytidine(2498) in 23S rRNA + S-adenosyl-L-homocysteine + H(+). Catalyzes the 2'-O-methylation at nucleotide C2498 in 23S rRNA. In Pseudoalteromonas atlantica (strain T6c / ATCC BAA-1087), this protein is Ribosomal RNA large subunit methyltransferase M.